We begin with the raw amino-acid sequence, 516 residues long: Nondiscriminating glutamyl-tRNA synthetase EARS2, mitochondrial (516 aa).

The transit peptide at 1-39 directs the protein to the mitochondrion; the sequence is MRPAFIRGKWLSRTLELATGLGRRTCSSRESGREVRVRF. An L-glutamate-binding site is contributed by 38–40; sequence RFA. A 'HIGH' region motif is present at residues 43–51; the sequence is PTGFLHLGG. Histidine 48 contributes to the ATP binding site. Residues glutamate 74, 226–230, and arginine 244 contribute to the L-glutamate site; that span reads YHLAN. Residues glutamate 247 and 282–286 contribute to the ATP site; that span reads KLSKR. A 'KMSKS' region motif is present at residues 282 to 286; the sequence is KLSKR.

This sequence belongs to the class-I aminoacyl-tRNA synthetase family. Glutamate--tRNA ligase type 1 subfamily.

It is found in the mitochondrion matrix. The catalysed reaction is tRNA(Glx) + L-glutamate + ATP = L-glutamyl-tRNA(Glx) + AMP + diphosphate. It carries out the reaction tRNA(Glu) + L-glutamate + ATP = L-glutamyl-tRNA(Glu) + AMP + diphosphate. It catalyses the reaction tRNA(Gln) + L-glutamate + ATP = L-glutamyl-tRNA(Gln) + AMP + diphosphate. In terms of biological role, non-discriminating glutamyl-tRNA synthetase that catalyzes aminoacylation of both mitochondrial tRNA(Glu) and tRNA(Gln) and participates in RNA aminoacylation for mitochondrial protein translation. Attachs glutamate to tRNA(Glu) or tRNA(Gln) in a two-step reaction: glutamate is first activated by ATP to form Glu-AMP and then transferred to the acceptor end of tRNA(Glu) or tRNA(Gln). The protein is Nondiscriminating glutamyl-tRNA synthetase EARS2, mitochondrial of Xenopus tropicalis (Western clawed frog).